Consider the following 783-residue polypeptide: Coiled-coil domain-containing protein 30 (783 aa).

Residues 1–22 (MSQEKNEMFESEWSKEREREKQ) show a composition bias toward basic and acidic residues. 3 disordered regions span residues 1–26 (MSQE…LASG), 101–191 (LGGK…LTMK), and 209–231 (LLQS…SSGE). The stretch at 22 to 98 (QLASGLDTAE…LSQEFAQLNH (77 aa)) forms a coiled coil. Residues 106-115 (APSNLITSEN) are compositionally biased toward polar residues. Residues 131–191 (IQSRKEETEE…EEKEQQLTMK (61 aa)) are compositionally biased toward basic and acidic residues. Coiled coils occupy residues 165 to 497 (REGQ…LNVH) and 527 to 622 (DKRI…RIIR). Residues 731–755 (EEIKSKEAMASSKSPEKSPENLVCS) form a disordered region.

It belongs to the prefoldin subunit beta family. As to expression, expressed in brain, kidney, pancreas, placenta, liver, thymus and prostate.

The protein is Coiled-coil domain-containing protein 30 (CCDC30) of Homo sapiens (Human).